The sequence spans 328 residues: Olfactory receptor 2AJ1 (328 aa).

Residues 1-25 (MGHQNHTFSSDFILLGLFSSSPTSV) are Extracellular-facing. N-linked (GlcNAc...) asparagine glycosylation occurs at N5. A helical membrane pass occupies residues 26-49 (VFFLVLFVIFIMSVTENTLMILLI). Residues 50–57 (RSDSRLHT) lie on the Cytoplasmic side of the membrane. Residues 58–79 (PMYFLLSHLSLMDILHVSNIVP) form a helical membrane-spanning segment. Topologically, residues 80-100 (KMVTNFLSGSRTISFAGCGFQ) are extracellular. C97 and C189 are disulfide-bonded. The helical transmembrane segment at 101-120 (VFLSLTLLGGECLLLAAMSC) threads the bilayer. The Cytoplasmic segment spans residues 121-139 (DRYVAICHPLRYPILMKEY). Residues 140–158 (ASALMAGGSWLIGVFNSTV) traverse the membrane as a helical segment. Topologically, residues 159–195 (HTAYALQFPFCGSRAIDHFFCEVPAMLKLSCADTTRY) are extracellular. Residues 196-219 (ERGVCVSAVIFLLIPFSLISASYG) form a helical membrane-spanning segment. The Cytoplasmic segment spans residues 220 to 236 (QIILTVLQMKSSEARKK). A helical membrane pass occupies residues 237–259 (SFSTCSFHMIVVTMYYGPFIFTY). At 260–272 (MRPKSYHTPGQDK) the chain is on the extracellular side. A helical membrane pass occupies residues 273 to 292 (FLAIFYTILTPTLNPFIYSF). The Cytoplasmic segment spans residues 293–328 (RNKDVLAVMKNMLKSNFLHKKMNRKIPECVFCLFLC).

The protein belongs to the G-protein coupled receptor 1 family.

The protein resides in the cell membrane. Odorant receptor. The protein is Olfactory receptor 2AJ1 (OR2AJ1) of Homo sapiens (Human).